The chain runs to 158 residues: Urease accessory protein UreE (158 aa).

This sequence belongs to the UreE family.

Its subcellular location is the cytoplasm. Its function is as follows. Involved in urease metallocenter assembly. Binds nickel. Probably functions as a nickel donor during metallocenter assembly. This Corynebacterium urealyticum (strain ATCC 43042 / DSM 7109) protein is Urease accessory protein UreE.